The chain runs to 212 residues: Large ribosomal subunit protein uL1 (212 aa).

This sequence belongs to the universal ribosomal protein uL1 family. Part of the 50S ribosomal subunit.

In terms of biological role, binds directly to 23S rRNA. Probably involved in E site tRNA release. Functionally, protein L1 is also a translational repressor protein, it controls the translation of its operon by binding to its mRNA. The sequence is that of Large ribosomal subunit protein uL1 from Methanothrix thermoacetophila (strain DSM 6194 / JCM 14653 / NBRC 101360 / PT) (Methanosaeta thermophila).